The following is a 220-amino-acid chain: 7-cyano-7-deazaguanine synthase (220 aa).

ATP is bound at residue 11 to 21 (VSGGMDSVTLM). Zn(2+) is bound by residues cysteine 186, cysteine 194, cysteine 197, and cysteine 200.

Belongs to the QueC family. Requires Zn(2+) as cofactor.

The catalysed reaction is 7-carboxy-7-deazaguanine + NH4(+) + ATP = 7-cyano-7-deazaguanine + ADP + phosphate + H2O + H(+). It functions in the pathway purine metabolism; 7-cyano-7-deazaguanine biosynthesis. Catalyzes the ATP-dependent conversion of 7-carboxy-7-deazaguanine (CDG) to 7-cyano-7-deazaguanine (preQ(0)). The chain is 7-cyano-7-deazaguanine synthase from Porphyromonas gingivalis (strain ATCC 33277 / DSM 20709 / CIP 103683 / JCM 12257 / NCTC 11834 / 2561).